We begin with the raw amino-acid sequence, 760 residues long: MMDQARSAFSNLFGGEPLSYTRFSLARQVDGDNSHVEMKLAVDEEENADNNTKANVTKPKRCGGSICYGTIAVIIFFLIGFMIGYLGYCKGVEPKTECERLAGTESPVREEPEEDFPAAPRLYWDDLKKKLSEKLDTTDFTSTIKLLNENSYVPREAGSQKDENLALYVENQFREFKLSKVWRDQHFVKIQVKDSAQNSVIIVDKNGRLVYLVENPGGYVAYSKAATVTGKLVHANFGTKKDFEDLDTPVNGSIVIVRAGKITFAEKVANAESLNAIGVLIYMDQTKFPIVNAELSFFGHAHLGTGDPYTPGFPSFNHTQFPPSRSSGLPNIPVQTISRAAAEKLFGNMEGDCPSDWKTDSTCRMVTSESKNVKLTVSNVLKEIKILNIFGVIKGFVEPDHYVVVGAQRDAWGPGAAKSGVGTALLLKLAEMFSDMVLKDGFQPSRSIIFASWSAGDFGSVGATEWLEGYLSSLHLKAFTYINLDKAVLGTSNFKVSASPLLYTLIEKTMQNVKHPVTGQSLYQDSNWASKVEKLTLDNAAFPFLAYSGIPAVSFCFCEDTDYPYLGTTMDTYKELTERIPELNKVARAAAEVAGQFMIKLTHDVELNLDYERYNSQLLSFVRDLNQYRADIKEMGLSLQWLYSARGDFFRATSRLTTDFGNAEKTDRFVMKKLNDRVMRVEYHFLSPYVSPKESPFRHVFWGSGSHTLSALLENLKLRKQNNSAFNETLFRNQLALATWTIQGAANALSGDVWDIDNEF.

Topologically, residues 1–65 (MMDQARSAFS…VTKPKRCGGS (65 aa)) are cytoplasmic. The interval 1 to 67 (MMDQARSAFS…KPKRCGGSIC (67 aa)) is mediates interaction with SH3BP4. Phosphoserine is present on residues Ser10 and Ser19. The residue at position 20 (Tyr20) is a Phosphotyrosine. Positions 20 to 23 (YTRF) match the Endocytosis signal motif. A Phosphothreonine modification is found at Thr21. A Phosphoserine modification is found at Ser24. Residues 58–61 (KPKR) carry the Stop-transfer sequence motif. 2 S-palmitoyl cysteine lipidation sites follow: Cys62 and Cys67. A helical; Signal-anchor for type II membrane protein membrane pass occupies residues 66 to 86 (ICYGTIAVIIFFLIGFMIGYL). Over 87–760 (GYCKGVEPKT…GDVWDIDNEF (674 aa)) the chain is Extracellular. The region spanning 223–313 (SKAATVTGKL…GTGDPYTPGF (91 aa)) is the PA domain. N-linked (GlcNAc...) asparagine glycans are attached at residues Asn251 and Asn317. The tract at residues 569–760 (TMDTYKELTE…GDVWDIDNEF (192 aa)) is ligand-binding. The short motif at 646 to 648 (RGD) is the Cell attachment site element. 2 N-linked (GlcNAc...) asparagine glycosylation sites follow: Asn722 and Asn727.

This sequence belongs to the peptidase M28 family. M28B subfamily. In terms of assembly, homodimer; disulfide-linked. Binds one transferrin or HFE molecule per subunit. Interacts with SH3BP4. Interacts with STEAP3; facilitates TFRC endocytosis in erythroid precursor cells. In terms of processing, stearoylated by ZDHHC6 which inhibits TFRC-mediated activation of the JNK pathway and promotes mitochondrial fragmentation. Stearoylation does not affect iron uptake.

Its subcellular location is the cell membrane. The protein resides in the melanosome. Its function is as follows. Cellular uptake of iron occurs via receptor-mediated endocytosis of ligand-occupied transferrin receptor into specialized endosomes. Endosomal acidification leads to iron release. The apotransferrin-receptor complex is then recycled to the cell surface with a return to neutral pH and the concomitant loss of affinity of apotransferrin for its receptor. Transferrin receptor is necessary for development of erythrocytes and the nervous system. Positively regulates T and B cell proliferation through iron uptake. Acts as a lipid sensor that regulates mitochondrial fusion by regulating activation of the JNK pathway. When dietary levels of stearate (C18:0) are low, promotes activation of the JNK pathway, resulting in HUWE1-mediated ubiquitination and subsequent degradation of the mitofusin MFN2 and inhibition of mitochondrial fusion. When dietary levels of stearate (C18:0) are high, TFRC stearoylation inhibits activation of the JNK pathway and thus degradation of the mitofusin MFN2. Mediates uptake of NICOL1 into fibroblasts where it may regulate extracellular matrix production. The protein is Transferrin receptor protein 1 (TFRC) of Pongo abelii (Sumatran orangutan).